We begin with the raw amino-acid sequence, 357 residues long: Probable cinnamyl alcohol dehydrogenase (357 aa).

C47 serves as a coordination point for Zn(2+). An NADP(+)-binding site is contributed by T49. Residues H69, E70, C100, C103, C106, C114, and C163 each coordinate Zn(2+). Residues T167, 188-193, 211-216, T251, G275, and 298-300 each bind NADP(+); these read GLGGVG, SSSDKK, and SFI.

Belongs to the zinc-containing alcohol dehydrogenase family. In terms of assembly, homodimer. Requires Zn(2+) as cofactor.

The catalysed reaction is (E)-cinnamyl alcohol + NADP(+) = (E)-cinnamaldehyde + NADPH + H(+). It carries out the reaction (E)-coniferol + NADP(+) = (E)-coniferaldehyde + NADPH + H(+). It catalyses the reaction (E)-sinapyl alcohol + NADP(+) = (E)-sinapaldehyde + NADPH + H(+). The enzyme catalyses (E)-4-coumaroyl alcohol + NADP(+) = (E)-4-coumaraldehyde + NADPH + H(+). The catalysed reaction is (E)-caffeyl alcohol + NADP(+) = (E)-caffeyl aldehyde + NADPH + H(+). It functions in the pathway aromatic compound metabolism; phenylpropanoid biosynthesis. In terms of biological role, involved in lignin biosynthesis. Catalyzes the final step specific for the production of lignin monomers. Catalyzes the NADPH-dependent reduction of coniferaldehyde, 5-hydroxyconiferaldehyde, sinapaldehyde, 4-coumaraldehyde and caffeyl aldehyde to their respective alcohols. This Populus deltoides (Eastern poplar) protein is Probable cinnamyl alcohol dehydrogenase.